The chain runs to 436 residues: Citrate synthase (436 aa).

Residues His311 and Asp370 contribute to the active site.

It belongs to the citrate synthase family.

The catalysed reaction is oxaloacetate + acetyl-CoA + H2O = citrate + CoA + H(+). It participates in carbohydrate metabolism; tricarboxylic acid cycle; isocitrate from oxaloacetate: step 1/2. In Rickettsia typhi (strain ATCC VR-144 / Wilmington), this protein is Citrate synthase (gltA).